The chain runs to 314 residues: Taste receptor type 2 member 42 (314 aa).

The Extracellular segment spans residues 1–7; the sequence is MATEMDK. The chain crosses the membrane as a helical span at residues 8-28; sequence IFLTLATVEFIIGMLGNVFIG. At 29–50 the chain is on the cytoplasmic side; it reads LVNCSEGIKNQKVFSVDFILTC. A helical membrane pass occupies residues 51-71; the sequence is LAISTIGHLLVILFDSCVVGL. At 72–101 the chain is on the extracellular side; it reads APHLYATDRVRRPVTMLWHMXNHLTTWLAT. A helical membrane pass occupies residues 102 to 122; the sequence is CLSIFYFFKIAHFPHSLFLWL. At 123 to 127 the chain is on the cytoplasmic side; the sequence is RWRMN. The chain crosses the membrane as a helical span at residues 128 to 148; it reads RVIAILLTLSLFLLIFDCLVL. The Extracellular portion of the chain corresponds to 149 to 187; it reads EMFIDXSLNIIDKSNLTLYLDESKTPYDKLSLLKILLSL. Asparagine 163 carries N-linked (GlcNAc...) asparagine glycosylation. Residues 188–208 form a helical membrane-spanning segment; it reads NSFIPFSLCLTSLLFLFLSLV. Residues 209–238 are Cytoplasmic-facing; that stretch reads RHTRNLKLSSLGSRDSSTEAHRRAMKMVMS. A helical membrane pass occupies residues 239-259; it reads LLFLFIVHFFSLQVANWTFCI. Residues 260 to 265 lie on the Extracellular side of the membrane; the sequence is LGNNKY. The chain crosses the membrane as a helical span at residues 266–286; that stretch reads TQFVTLALHAFPSCHSFILIL. Residues 287–314 are Cytoplasmic-facing; that stretch reads GNSKLRQTAVRLLWHLRNYTKRPNPLPL.

The protein belongs to the G-protein coupled receptor T2R family.

The protein localises to the membrane. Its function is as follows. Receptor that may play a role in the perception of bitterness and is gustducin-linked. May play a role in sensing the chemical composition of the gastrointestinal content. The activity of this receptor may stimulate alpha gustducin, mediate PLC-beta-2 activation and lead to the gating of TRPM5. This Macaca mulatta (Rhesus macaque) protein is Taste receptor type 2 member 42 (TAS2R42).